Consider the following 216-residue polypeptide: LexA repressor (216 aa).

Positions 28–48 (RAEIAAEFGFSSPNAAEEHLR) form a DNA-binding region, H-T-H motif. Catalysis depends on for autocatalytic cleavage activity residues serine 134 and lysine 171.

It belongs to the peptidase S24 family. In terms of assembly, homodimer.

The enzyme catalyses Hydrolysis of Ala-|-Gly bond in repressor LexA.. Functionally, represses a number of genes involved in the response to DNA damage (SOS response), including recA and lexA. In the presence of single-stranded DNA, RecA interacts with LexA causing an autocatalytic cleavage which disrupts the DNA-binding part of LexA, leading to derepression of the SOS regulon and eventually DNA repair. This chain is LexA repressor, found in Ralstonia nicotianae (strain ATCC BAA-1114 / GMI1000) (Ralstonia solanacearum).